A 292-amino-acid chain; its full sequence is Peroxisomal 2,4-dienoyl-CoA reductase [(3E)-enoyl-CoA-producing] (292 aa).

An N-acetylalanine modification is found at Ala-2. NADP(+) contacts are provided by residues 35–40 (GGGSGI), 60–64 (RSLPR), and Asp-86. Arg-60 is a substrate binding site. Substrate-binding positions include Arg-88, Phe-118, and 126 to 128 (SFN). N6-acetyllysine is present on Lys-151. Residues Lys-182 and 208–214 (PGPISGT) contribute to the NADP(+) site. Position 219 (Arg-219) interacts with substrate. Ser-287 carries the phosphoserine modification. Positions 290–292 (AKL) match the Microbody targeting signal motif. N6-acetyllysine is present on Lys-291.

Belongs to the short-chain dehydrogenases/reductases (SDR) family. 2,4-dienoyl-CoA reductase subfamily. In terms of assembly, monomer, dimer and oligomer.

It is found in the peroxisome. The catalysed reaction is a (2E,4Z)-dienoyl-CoA + NADPH + H(+) = a 4,5-saturated-(3E)-enoyl-CoA + NADP(+). The enzyme catalyses a (2E,4E)-dienoyl-CoA + NADPH + H(+) = a 4,5-saturated-(3E)-enoyl-CoA + NADP(+). It catalyses the reaction (2E,4E)-hexadienoyl-CoA + NADPH + H(+) = (3E)-hexenoyl-CoA + NADP(+). It carries out the reaction (2E,4E)-decadienoyl-CoA + NADPH + H(+) = (3E)-decenoyl-CoA + NADP(+). The catalysed reaction is (2E,4Z,7Z,10Z,13Z,16Z,19Z)-docosaheptaenoyl-CoA + NADPH + H(+) = (3E,7Z,10Z,13Z,16Z,19Z)-docosahexaenoyl-CoA + NADP(+). Auxiliary enzyme of beta-oxidation. Participates in the degradation of unsaturated fatty enoyl-CoA esters having double bonds in both even- and odd-numbered positions in peroxisome. Catalyzes the NADP-dependent reduction of 2,4-dienoyl-CoA to yield trans-3-enoyl-CoA. Has activity towards short and medium chain 2,4-dienoyl-CoAs, but also towards 2,4,7,10,13,16,19-docosaheptaenoyl-CoA, suggesting that it does not constitute a rate limiting step in the peroxisomal degradation of docosahexaenoic acid. The sequence is that of Peroxisomal 2,4-dienoyl-CoA reductase [(3E)-enoyl-CoA-producing] (DECR2) from Pongo abelii (Sumatran orangutan).